A 319-amino-acid polypeptide reads, in one-letter code: Aspartate carbamoyltransferase catalytic subunit (319 aa).

Carbamoyl phosphate is bound by residues Arg-64 and Thr-65. Lys-92 lines the L-aspartate pocket. Arg-114, His-142, and Gln-145 together coordinate carbamoyl phosphate. Positions 175 and 229 each coordinate L-aspartate. Residues Gly-270 and Pro-271 each contribute to the carbamoyl phosphate site.

This sequence belongs to the aspartate/ornithine carbamoyltransferase superfamily. ATCase family. As to quaternary structure, heterododecamer (2C3:3R2) of six catalytic PyrB chains organized as two trimers (C3), and six regulatory PyrI chains organized as three dimers (R2).

The enzyme catalyses carbamoyl phosphate + L-aspartate = N-carbamoyl-L-aspartate + phosphate + H(+). It functions in the pathway pyrimidine metabolism; UMP biosynthesis via de novo pathway; (S)-dihydroorotate from bicarbonate: step 2/3. In terms of biological role, catalyzes the condensation of carbamoyl phosphate and aspartate to form carbamoyl aspartate and inorganic phosphate, the committed step in the de novo pyrimidine nucleotide biosynthesis pathway. This Rhodospirillum rubrum (strain ATCC 11170 / ATH 1.1.1 / DSM 467 / LMG 4362 / NCIMB 8255 / S1) protein is Aspartate carbamoyltransferase catalytic subunit.